We begin with the raw amino-acid sequence, 420 residues long: Protein ECERIFERUM 26-like (420 aa).

Belongs to the plant acyltransferase family. In terms of tissue distribution, highly expressed in flowers. Expressed in leaves.

In terms of biological role, involved in biosynthesis of the epicuticular wax. Plays a role in very-long-chain fatty acid (VLCFA) biosynthesis and is required for VLCFA elongation in leaf. Despite its classification as a BAHD acyltransferase based on sequence homology, CER26L does not seem to share the catalytic mechanism of the members of the BAHD family. This is Protein ECERIFERUM 26-like (CER26L) from Arabidopsis thaliana (Mouse-ear cress).